The chain runs to 427 residues: MMPSESGDESLEQPAAQVGTGAASAVATAGAAGGGPDLEASSASLGRHQSRLSWPQVKRLDALLKEPIPIHGRGNFPTLSVQPQQIVQVVRSSLEEQGLHVHSVRLHGSAASHVLHPESGLGYKDLDLVFQMDLQSEASFQLTKAVVLACLLDFLPAGVSRAKITPLTLKEAYVQKLVKVCTDLDRWSLISLSNKSGKNVELKFVDSVRRQFEFSIDSFQIILDSLLLFGQCSSTPMSEAFHPTVTGESLYGDFAEALEHLQHRVIATRSPEEIRGGGLLKYCHLLVRGFRPRPSTDVRALQRYMCSRFFIDFPDPVEQRRILERYLEAHFGGAEAARRYACLVTLHRVVNESTVCLMSHERRQTLDLITMLALQALAEQGPAAMAALAWRRPGSDGVVPATVNYYVTPMQPLLPRAHSYPTWLPCN.

The span at 1 to 11 (MMPSESGDESL) shows a compositional bias: acidic residues. The tract at residues 1–46 (MMPSESGDESLEQPAAQVGTGAASAVATAGAAGGGPDLEASSASLG) is disordered. Low complexity predominate over residues 15–30 (AAQVGTGAASAVATAG).

It belongs to the TENT family.

It is found in the cytoplasm. The protein resides in the nucleus. It catalyses the reaction RNA(n) + ATP = RNA(n)-3'-adenine ribonucleotide + diphosphate. Functionally, catalyzes the transfer of one adenosine molecule from an ATP to an mRNA poly(A) tail bearing a 3'-OH terminal group in an ATP hydrolysis-dependent manner. May be involved in maintaining the translation efficiency of at least some genes through preventing degradation of their mRNAs. Prefers RNA molecules that are adenosine-rich close to 3'-end. In addition, may inhibit cell proliferation and cell cycle progression through ubiquitination of beta-catenin/CTNNB1. The chain is Terminal nucleotidyltransferase 5B from Rattus norvegicus (Rat).